We begin with the raw amino-acid sequence, 397 residues long: Enoyl-[acyl-carrier-protein] reductase [NADH] (397 aa).

NAD(+) is bound by residues 48–53 (GASTGY), 74–75 (FE), 111–112 (DA), and 139–140 (VA). Y225 serves as a coordination point for substrate. Residue Y235 is the Proton donor of the active site. Residues K244 and 273-275 (VVT) each bind NAD(+).

It belongs to the TER reductase family. As to quaternary structure, monomer.

It catalyses the reaction a 2,3-saturated acyl-[ACP] + NAD(+) = a (2E)-enoyl-[ACP] + NADH + H(+). It participates in lipid metabolism; fatty acid biosynthesis. Functionally, involved in the final reduction of the elongation cycle of fatty acid synthesis (FAS II). Catalyzes the reduction of a carbon-carbon double bond in an enoyl moiety that is covalently linked to an acyl carrier protein (ACP). This chain is Enoyl-[acyl-carrier-protein] reductase [NADH], found in Burkholderia mallei (strain NCTC 10247).